The primary structure comprises 65 residues: Large ribosomal subunit protein bL35 (65 aa).

This sequence belongs to the bacterial ribosomal protein bL35 family.

This chain is Large ribosomal subunit protein bL35, found in Clostridium kluyveri (strain NBRC 12016).